The chain runs to 500 residues: Probable cytosol aminopeptidase (500 aa).

Residues Lys-265 and Asp-270 each coordinate Mn(2+). The active site involves Lys-277. Asp-288, Asp-347, and Glu-349 together coordinate Mn(2+). The active site involves Arg-351.

The protein belongs to the peptidase M17 family. It depends on Mn(2+) as a cofactor.

It localises to the cytoplasm. It carries out the reaction Release of an N-terminal amino acid, Xaa-|-Yaa-, in which Xaa is preferably Leu, but may be other amino acids including Pro although not Arg or Lys, and Yaa may be Pro. Amino acid amides and methyl esters are also readily hydrolyzed, but rates on arylamides are exceedingly low.. The catalysed reaction is Release of an N-terminal amino acid, preferentially leucine, but not glutamic or aspartic acids.. In terms of biological role, presumably involved in the processing and regular turnover of intracellular proteins. Catalyzes the removal of unsubstituted N-terminal amino acids from various peptides. The protein is Probable cytosol aminopeptidase of Rickettsia typhi (strain ATCC VR-144 / Wilmington).